The primary structure comprises 1088 residues: TBC1 domain family member 31 (1088 aa).

Residues 1-20 are disordered; sequence MQTTDLGNKESGKIWHRKPN. WD repeat units follow at residues 33–74, 75–116, 117–157, 158–200, 201–248, 249–296, and 297–334; these read HVDA…LNRN, RFDL…TGAK, ELVS…LDTF, QRKR…SDTL, ACKY…SKQL, FRII…IQTC, and KLVF…NIYS. Residues 356–381 are disordered; the sequence is SKDKDSTGNKSGVSGASQEKVRVSSG. Positions 363–372 are enriched in polar residues; the sequence is GNKSGVSGAS. In terms of domain architecture, Rab-GAP TBC spans 432-607; that stretch reads EYPAKYRMFI…RLFDNVFSNH (176 aa). Coiled coils occupy residues 736 to 903 and 1048 to 1076; these read QQQE…VETD and RGEL…ARRK.

The protein resides in the cytoplasm. It localises to the cytoskeleton. Its subcellular location is the microtubule organizing center. It is found in the centrosome. The protein localises to the centriolar satellite. The protein resides in the cilium basal body. Its function is as follows. Molecular adapter which is involved in cilium biogenesis. Part of a functional complex including OFD1 a centriolar protein involved in cilium assembly. Could regulate the cAMP-dependent phosphorylation of OFD1, and its subsequent ubiquitination by PJA2 which ultimately leads to its proteasomal degradation. The polypeptide is TBC1 domain family member 31 (Xenopus tropicalis (Western clawed frog)).